The sequence spans 172 residues: NADH-ubiquinone oxidoreductase chain 6 (172 aa).

Helical transmembrane passes span 1–21 (MTYF…AVAS), 27–47 (YGVV…LSLG), 48–68 (ISFV…VVFV), 87–107 (VVGY…VGGF), and 138–158 (CGVG…FVVL).

It belongs to the complex I subunit 6 family.

It is found in the mitochondrion membrane. The enzyme catalyses a ubiquinone + NADH + 5 H(+)(in) = a ubiquinol + NAD(+) + 4 H(+)(out). In terms of biological role, core subunit of the mitochondrial membrane respiratory chain NADH dehydrogenase (Complex I) that is believed to belong to the minimal assembly required for catalysis. Complex I functions in the transfer of electrons from NADH to the respiratory chain. The immediate electron acceptor for the enzyme is believed to be ubiquinone. This chain is NADH-ubiquinone oxidoreductase chain 6 (MT-ND6), found in Uria aalge (Common mure).